Consider the following 244-residue polypeptide: 5-oxoprolinase subunit A (244 aa).

The protein belongs to the LamB/PxpA family. Forms a complex composed of PxpA, PxpB and PxpC.

It carries out the reaction 5-oxo-L-proline + ATP + 2 H2O = L-glutamate + ADP + phosphate + H(+). Catalyzes the cleavage of 5-oxoproline to form L-glutamate coupled to the hydrolysis of ATP to ADP and inorganic phosphate. This is 5-oxoprolinase subunit A from Escherichia coli O6:K15:H31 (strain 536 / UPEC).